Reading from the N-terminus, the 103-residue chain is Small ribosomal subunit protein uS14c (103 aa).

The protein belongs to the universal ribosomal protein uS14 family. In terms of assembly, part of the 30S ribosomal subunit.

It is found in the plastid. It localises to the chloroplast. Functionally, binds 16S rRNA, required for the assembly of 30S particles. This Lolium perenne (Perennial ryegrass) protein is Small ribosomal subunit protein uS14c.